The chain runs to 638 residues: DNA mismatch repair protein MutL (638 aa).

Residues 398–435 form a disordered region; sequence GREGTSFGTQTNAFGSMATPRDNSRGSYSAGESRQRTE.

Belongs to the DNA mismatch repair MutL/HexB family.

Its function is as follows. This protein is involved in the repair of mismatches in DNA. It is required for dam-dependent methyl-directed DNA mismatch repair. May act as a 'molecular matchmaker', a protein that promotes the formation of a stable complex between two or more DNA-binding proteins in an ATP-dependent manner without itself being part of a final effector complex. The polypeptide is DNA mismatch repair protein MutL (Shewanella baltica (strain OS155 / ATCC BAA-1091)).